The sequence spans 278 residues: ATP synthase subunit delta (278 aa).

It belongs to the ATPase delta chain family. In terms of assembly, F-type ATPases have 2 components, F(1) - the catalytic core - and F(0) - the membrane proton channel. F(1) has five subunits: alpha(3), beta(3), gamma(1), delta(1), epsilon(1). F(0) has three main subunits: a(1), b(2) and c(10-14). The alpha and beta chains form an alternating ring which encloses part of the gamma chain. F(1) is attached to F(0) by a central stalk formed by the gamma and epsilon chains, while a peripheral stalk is formed by the delta and b chains.

It localises to the cell membrane. In terms of biological role, f(1)F(0) ATP synthase produces ATP from ADP in the presence of a proton or sodium gradient. F-type ATPases consist of two structural domains, F(1) containing the extramembraneous catalytic core and F(0) containing the membrane proton channel, linked together by a central stalk and a peripheral stalk. During catalysis, ATP synthesis in the catalytic domain of F(1) is coupled via a rotary mechanism of the central stalk subunits to proton translocation. This protein is part of the stalk that links CF(0) to CF(1). It either transmits conformational changes from CF(0) to CF(1) or is implicated in proton conduction. The protein is ATP synthase subunit delta of Bifidobacterium longum (strain DJO10A).